A 148-amino-acid chain; its full sequence is Phospholipase A2-alpha (148 aa).

The signal sequence occupies residues 1 to 20 (MAAPIILFSFLLFFSVSVSA). Cystine bridges form between Cys38-Cys66, Cys42-Cys72, Cys47-Cys122, Cys59-Cys79, Cys78-Cys105, and Cys85-Cys98. 3 residues coordinate Ca(2+): Tyr58, Gly60, and Tyr63. His82 is an active-site residue. Asp83 is a binding site for Ca(2+).

It belongs to the phospholipase A2 family. In terms of assembly, interacts with MYB30. Requires Ca(2+) as cofactor. As to expression, ubiquitous but expressed at a low level.

Its subcellular location is the secreted. It localises to the golgi apparatus. The protein localises to the cytoplasmic vesicle. It is found in the nucleus. The enzyme catalyses a 1,2-diacyl-sn-glycero-3-phosphocholine + H2O = a 1-acyl-sn-glycero-3-phosphocholine + a fatty acid + H(+). Functionally, PA2 catalyzes the calcium-dependent hydrolysis of the 2-acyl groups in 3-sn-phosphoglycerides. Releases lysophospholipids (LPLs) and free fatty acids (FFAs) from membrane phospholipids in response to hormones and other external stimuli. Modulates the trafficking of PIN proteins to the plasma membrane. Negatively regulates MYB30 transcriptional activity and hypersensitive response control. This is Phospholipase A2-alpha from Arabidopsis thaliana (Mouse-ear cress).